A 176-amino-acid polypeptide reads, in one-letter code: Large ribosomal subunit protein uL6 (176 aa).

The span at 151 to 170 (RPPEPYKGKGVRYADEQVRR) shows a compositional bias: basic and acidic residues. Positions 151–176 (RPPEPYKGKGVRYADEQVRRKEAKKK) are disordered.

This sequence belongs to the universal ribosomal protein uL6 family. Part of the 50S ribosomal subunit.

In terms of biological role, this protein binds to the 23S rRNA, and is important in its secondary structure. It is located near the subunit interface in the base of the L7/L12 stalk, and near the tRNA binding site of the peptidyltransferase center. The polypeptide is Large ribosomal subunit protein uL6 (Shewanella loihica (strain ATCC BAA-1088 / PV-4)).